A 741-amino-acid polypeptide reads, in one-letter code: Aspartyl/asparaginyl beta-hydroxylase (741 aa).

The tract at residues 1–54 (MAPRKNAKGGGGNSSSSGSGSGSGSGSPSTGSSGSSSSPGARREAKHGGHKNGR) is disordered. Residues 1–62 (MAPRKNAKGG…GRRGGISGGS (62 aa)) lie on the Cytoplasmic side of the membrane. The span at 8-25 (KGGGGNSSSSGSGSGSGS) shows a compositional bias: gly residues. Phosphoserine is present on S15. Over residues 26–40 (GSPSTGSSGSSSSPG) the composition is skewed to low complexity. The helical; Signal-anchor for type II membrane protein transmembrane segment at 63–83 (FFTWFMVIALLGVWTSVAVVW) threads the bilayer. Topologically, residues 84-741 (FDLVDYEEVL…PQQRRSLPAI (658 aa)) are lumenal. Positions 100, 102, 104, 106, and 111 each coordinate Ca(2+). Disordered regions lie at residues 120–141 (ERSPSERTFPPEEEAETHAELE) and 222–244 (TASQNHPNDMEEMTNEQENSDPS). Positions 231-242 (MEEMTNEQENSD) are enriched in acidic residues. TPR repeat units follow at residues 324–357 (IKAELDAAEKLRKRGKIEEAVNAFEELVRKYPQS), 365–398 (AQCEDDLAEKQRSNEVLRRAIETYQEAADLPDAP), 437–470 (TTLKNDLGVGYLLLGDNDSAKKVYEEVLNVTPND), 472–504 (FAKVHYGFILKAQNKISESIPYLKEGIESGDPG), and 508–540 (GRFYFHLGDAMQRVGNKEAYKWYELGHKRGHFA). N453 carries N-linked (GlcNAc...) asparagine glycosylation. W608 provides a ligand contact to 2-oxoglutarate. C624 and C631 are disulfide-bonded. Residue S651 coordinates 2-oxoglutarate. H662 lines the Fe cation pocket. Position 671 to 673 (671 to 673 (RMH)) interacts with 2-oxoglutarate. N689 carries N-linked (GlcNAc...) asparagine glycosylation. H708 is a Fe cation binding site. Residue R718 coordinates 2-oxoglutarate.

The protein belongs to the aspartyl/asparaginyl beta-hydroxylase family. In terms of assembly, monomer. Isoform 2 interacts with CASQ2. Fe cation is required as a cofactor. Isoform 1 is detected in heart, liver and ovary (at protein level). Detected in heart ventricle. Isoform 1 is widely expressed. Isoform 2 is detected in heart and skeletal muscle.

It is found in the endoplasmic reticulum membrane. Its subcellular location is the sarcoplasmic reticulum membrane. It catalyses the reaction L-aspartyl-[protein] + 2-oxoglutarate + O2 = 3-hydroxy-L-aspartyl-[protein] + succinate + CO2. Its function is as follows. Specifically hydroxylates an Asp or Asn residue in certain epidermal growth factor-like (EGF) domains of a number of proteins. The chain is Aspartyl/asparaginyl beta-hydroxylase (Asph) from Mus musculus (Mouse).